We begin with the raw amino-acid sequence, 69 residues long: Large ribosomal subunit protein uL29 (69 aa).

It belongs to the universal ribosomal protein uL29 family.

This chain is Large ribosomal subunit protein uL29, found in Clostridium perfringens (strain ATCC 13124 / DSM 756 / JCM 1290 / NCIMB 6125 / NCTC 8237 / Type A).